A 1364-amino-acid polypeptide reads, in one-letter code: Serine protease SepA autotransporter (1364 aa).

The signal sequence occupies residues 1-56 (MNKIYYLKYCHITKSLIAVSELARRVTCKSHRRLSRRVILTSVAALSLSSAWPALS). Positions 57-307 (ATVSAEIPYQ…VVTTQDFLGQ (251 aa)) constitute a Peptidase S6 domain. Catalysis depends on charge relay system residues H134, D162, and S267. The Autotransporter domain maps to 1098 to 1364 (DTQGDAGVWA…AINANFRYVF (267 aa)).

In terms of processing, cleaved to release the mature protein from the outer membrane. Cleavage is performed by an unknown protease.

It localises to the periplasm. Its subcellular location is the secreted. It is found in the cell surface. The protein localises to the cell outer membrane. With respect to regulation, inhibited by the serine protease inhibitor PMSF, but not by benzamidine, alpha 1-antitrypsin, alpha 1-antichymotrypsin. Not inhibited by metalloprotease inhibitors such as EDTA and orthophenanthroline. In terms of biological role, major protein secreted in laboratory media showing proteolytic activity. May be involved in invasion and destruction of host intestinal epithelium. This Shigella flexneri protein is Serine protease SepA autotransporter (sepA).